Here is a 527-residue protein sequence, read N- to C-terminus: MNKNVLKFVSRSLLIFSMTGLISNYNSSNVLAKGNVEEHSLINNGQVVTSNTKCNLAKDNSSDIDKNIYGLSYDPRKILSYNGEQVENFVPAEGFENPDKFIVVKREKKSISDSTADISIIDSINDRTYPGAIQLANRNLMENKPDIISCERKPITISVDLPGMAEDGKKVVNSPTYSSVNSAINSILDTWNSKYSSKYTIPTRMSYSDTMVYSQSQLSAAVGCNFKALNKALNIDFDSIFKGEKKVMLLAYKQIFYTVSVDPPNRPSDLFGDSVTFDELALKGINNNNPPAYVSNVAYGRTIYVKLETTSKSSHVKAAFKALINNQDISSNAEYKDILNQSSFTATVLGGGAQEHNKIITKDFDEIRNIIKNNSVYSPQNPGYPISYTTTFLKDNSIASVNNKTEYIETTATEYTNGKIVLDHSGAYVAQFQVTWDEVSYDEKGNEIVEHKAWEGNNRDRTAHFNTEIYLKGNARNISVKIRECTGLAWEWWRTIVDVKNIPLAKERTFYIWGTTLYPKTSIETKM.

Positions 1–32 are cleaved as a signal peptide; the sequence is MNKNVLKFVSRSLLIFSMTGLISNYNSSNVLA. The next 4 membrane-spanning stretches (beta stranded) occupy residues 215 to 228, 235 to 244, 313 to 322, and 330 to 342; these read QSQL…NFKA, IDFDSIFKGE, SSHVKAAFKA, and SSNA…LNQS. The Conserved undecapeptide motif lies at 484 to 494; sequence ECTGLAWEWWR. The short motif at 516-517 is the Cholesterol binding element; it reads TL.

Belongs to the cholesterol-dependent cytolysin family. In terms of assembly, homooligomeric pore complex containing 35-50 subunits; when inserted in the host membrane. Purified 48 and 53 kDa proteins with 4 different pIs (6.1, 5.6, 5.3 and 6.6) in decreasing order of activity.

The protein resides in the secreted. It localises to the host cell membrane. With respect to regulation, cytolysis of host cells is inhibited by cholesterol. Functionally, a cholesterol-dependent toxin that causes cytolysis by forming pores in cholesterol-containing host membranes. After binding to target membranes, the protein undergoes a major conformation change, leading to its insertion in the host membrane and formation of an oligomeric pore complex. Cholesterol is required for binding to host membranes, membrane insertion and pore formation; cholesterol binding is mediated by a Thr-Leu pair in the C-terminus. The chain is Tetanolysin from Clostridium tetani (strain Massachusetts / E88).